Here is a 156-residue protein sequence, read N- to C-terminus: Cyanate hydratase (156 aa).

Residues Arg-96, Glu-99, and Ser-122 contribute to the active site.

The protein belongs to the cyanase family.

The catalysed reaction is cyanate + hydrogencarbonate + 3 H(+) = NH4(+) + 2 CO2. In terms of biological role, catalyzes the reaction of cyanate with bicarbonate to produce ammonia and carbon dioxide. The chain is Cyanate hydratase from Burkholderia pseudomallei (strain 1106a).